The primary structure comprises 197 residues: Putative NADH dehydrogenase/NAD(P)H nitroreductase Plav_3612 (197 aa).

Belongs to the nitroreductase family. HadB/RutE subfamily. FMN serves as cofactor.

In Parvibaculum lavamentivorans (strain DS-1 / DSM 13023 / NCIMB 13966), this protein is Putative NADH dehydrogenase/NAD(P)H nitroreductase Plav_3612.